The chain runs to 312 residues: Aspartate carbamoyltransferase catalytic subunit (312 aa).

Carbamoyl phosphate-binding residues include arginine 55 and threonine 56. Residue lysine 83 coordinates L-aspartate. Residues arginine 105, histidine 138, and glutamine 141 each contribute to the carbamoyl phosphate site. Positions 171 and 225 each coordinate L-aspartate. Carbamoyl phosphate contacts are provided by glycine 266 and proline 267.

This sequence belongs to the aspartate/ornithine carbamoyltransferase superfamily. ATCase family. Heterododecamer (2C3:3R2) of six catalytic PyrB chains organized as two trimers (C3), and six regulatory PyrI chains organized as three dimers (R2).

The catalysed reaction is carbamoyl phosphate + L-aspartate = N-carbamoyl-L-aspartate + phosphate + H(+). The protein operates within pyrimidine metabolism; UMP biosynthesis via de novo pathway; (S)-dihydroorotate from bicarbonate: step 2/3. In terms of biological role, catalyzes the condensation of carbamoyl phosphate and aspartate to form carbamoyl aspartate and inorganic phosphate, the committed step in the de novo pyrimidine nucleotide biosynthesis pathway. This is Aspartate carbamoyltransferase catalytic subunit from Corynebacterium efficiens (strain DSM 44549 / YS-314 / AJ 12310 / JCM 11189 / NBRC 100395).